Reading from the N-terminus, the 453-residue chain is Chromosomal replication initiator protein DnaA (453 aa).

The interval 1–71 (MSEKEIWEKV…QAILFDVVGY (71 aa)) is domain I, interacts with DnaA modulators. Residues 71–114 (YEVKPHFITTEELANYSNNETATPKEATKPSTETTEDNHVLGRE) form a domain II region. Positions 115–331 (QFNAHNTFDT…GALTRLLAYS (217 aa)) are domain III, AAA+ region. Gly159, Gly161, Lys162, and Thr163 together coordinate ATP. Residues 332–453 (QLLGKPITTE…ENLEKEIRNV (122 aa)) form a domain IV, binds dsDNA region.

It belongs to the DnaA family. Oligomerizes as a right-handed, spiral filament on DNA at oriC.

It is found in the cytoplasm. Plays an essential role in the initiation and regulation of chromosomal replication. ATP-DnaA binds to the origin of replication (oriC) to initiate formation of the DNA replication initiation complex once per cell cycle. Binds the DnaA box (a 9 base pair repeat at the origin) and separates the double-stranded (ds)DNA. Forms a right-handed helical filament on oriC DNA; dsDNA binds to the exterior of the filament while single-stranded (ss)DNA is stabiized in the filament's interior. The ATP-DnaA-oriC complex binds and stabilizes one strand of the AT-rich DNA unwinding element (DUE), permitting loading of DNA polymerase. After initiation quickly degrades to an ADP-DnaA complex that is not apt for DNA replication. Binds acidic phospholipids. The chain is Chromosomal replication initiator protein DnaA from Staphylococcus aureus (strain MRSA252).